Here is a 667-residue protein sequence, read N- to C-terminus: Protein angel homolog 1 (667 aa).

2 positions are modified to phosphoserine: serine 77 and serine 105.

The protein belongs to the CCR4/nocturin family.

The polypeptide is Protein angel homolog 1 (Mus musculus (Mouse)).